The sequence spans 238 residues: 3-dehydroquinate dehydratase (238 aa).

Residues 35-37 (ELR) and arginine 70 contribute to the 3-dehydroquinate site. The active-site Proton donor/acceptor is histidine 133. Lysine 160 functions as the Schiff-base intermediate with substrate in the catalytic mechanism. Arginine 202 and glutamine 225 together coordinate 3-dehydroquinate.

Belongs to the type-I 3-dehydroquinase family. As to quaternary structure, homodimer.

It catalyses the reaction 3-dehydroquinate = 3-dehydroshikimate + H2O. The protein operates within metabolic intermediate biosynthesis; chorismate biosynthesis; chorismate from D-erythrose 4-phosphate and phosphoenolpyruvate: step 3/7. In terms of biological role, involved in the third step of the chorismate pathway, which leads to the biosynthesis of aromatic amino acids. Catalyzes the cis-dehydration of 3-dehydroquinate (DHQ) and introduces the first double bond of the aromatic ring to yield 3-dehydroshikimate. The chain is 3-dehydroquinate dehydratase from Staphylococcus aureus (strain Mu3 / ATCC 700698).